We begin with the raw amino-acid sequence, 86 residues long: Putative membrane protein insertion efficiency factor (86 aa).

This sequence belongs to the UPF0161 family.

The protein resides in the cell inner membrane. Its function is as follows. Could be involved in insertion of integral membrane proteins into the membrane. The chain is Putative membrane protein insertion efficiency factor from Pseudomonas aeruginosa (strain LESB58).